The primary structure comprises 122 residues: Piercer of microtubule wall 2 protein (122 aa).

The span at 1 to 23 (MARETDCDLDKKTSLTSDAEMRP) shows a compositional bias: basic and acidic residues. Disordered stretches follow at residues 1–26 (MARE…PEPP) and 99–122 (QNNS…QHTL). Residues 113-122 (IDSPNYQHTL) are compositionally biased toward polar residues.

This sequence belongs to the PIERCE2 family. In terms of assembly, microtubule inner protein component of sperm flagellar doublet microtubules. Interacts with CFAP53, ODAD1 and ODAD3; the interactions link the outer dynein arms docking complex (ODA-DC) to the internal microtubule inner proteins (MIP) in cilium axoneme.

It is found in the cytoplasm. It localises to the cytoskeleton. The protein localises to the cilium axoneme. Its subcellular location is the flagellum axoneme. Functionally, microtubule inner protein involved in the attachment of outer dynein arms (ODAs) to dynein-decorated doublet microtubules (DMTs) in cilia axoneme, which is required for motile cilia beating. This is Piercer of microtubule wall 2 protein from Mus musculus (Mouse).